Here is a 224-residue protein sequence, read N- to C-terminus: MLDSPKLTARQQQILDLIQTAIARTGAPPTRAEIAAEFGFKSANAAEEHLQALARKGVIELVSGTSRGIRLRGEAVRSINAARGTQFHLPIPGISQLMLPLIGRVAAGSPILAEEHVDQTYSVEGSLFQHKPDYLLKVRGMSMRDAGIMDGDLLAVQSTREARNGQIIVARLGDEVTVKRLRRTAGAIELLPENPDYPIITVQPGESFEIEGLAVGLIRNTMLM.

A DNA-binding region (H-T-H motif) is located at residues 31 to 51 (RAEIAAEFGFKSANAAEEHLQ). Active-site for autocatalytic cleavage activity residues include serine 142 and lysine 179.

This sequence belongs to the peptidase S24 family. Homodimer.

It catalyses the reaction Hydrolysis of Ala-|-Gly bond in repressor LexA.. Represses a number of genes involved in the response to DNA damage (SOS response), including recA and lexA. In the presence of single-stranded DNA, RecA interacts with LexA causing an autocatalytic cleavage which disrupts the DNA-binding part of LexA, leading to derepression of the SOS regulon and eventually DNA repair. The chain is LexA repressor from Paracidovorax citrulli (strain AAC00-1) (Acidovorax citrulli).